Consider the following 230-residue polypeptide: Cytochrome c oxidase subunit 2 (230 aa).

At 1 to 14 the chain is on the mitochondrial intermembrane side; sequence MAHPSQLGFQDAAS. Residues 15 to 45 form a helical membrane-spanning segment; that stretch reads PVMEELIHFHDHTLMIVFLISTLVLYIITAM. Residues 46-59 are Mitochondrial matrix-facing; that stretch reads VSTKLTNKYILDSQ. The chain crosses the membrane as a helical span at residues 60-87; the sequence is EIEIVWTILPAIILIMIALPSLRILYLM. Residues 88 to 230 are Mitochondrial intermembrane-facing; sequence DEINDPHLTI…TWSSLMLEEA (143 aa). Cu cation is bound by residues H161, C196, E198, C200, H204, and M207. E198 contacts Mg(2+).

This sequence belongs to the cytochrome c oxidase subunit 2 family. Component of the cytochrome c oxidase (complex IV, CIV), a multisubunit enzyme composed of 14 subunits. The complex is composed of a catalytic core of 3 subunits MT-CO1, MT-CO2 and MT-CO3, encoded in the mitochondrial DNA, and 11 supernumerary subunits COX4I, COX5A, COX5B, COX6A, COX6B, COX6C, COX7A, COX7B, COX7C, COX8 and NDUFA4, which are encoded in the nuclear genome. The complex exists as a monomer or a dimer and forms supercomplexes (SCs) in the inner mitochondrial membrane with NADH-ubiquinone oxidoreductase (complex I, CI) and ubiquinol-cytochrome c oxidoreductase (cytochrome b-c1 complex, complex III, CIII), resulting in different assemblies (supercomplex SCI(1)III(2)IV(1) and megacomplex MCI(2)III(2)IV(2)). Found in a complex with TMEM177, COA6, COX18, COX20, SCO1 and SCO2. Interacts with TMEM177 in a COX20-dependent manner. Interacts with COX20. Interacts with COX16. Cu cation is required as a cofactor.

It localises to the mitochondrion inner membrane. It carries out the reaction 4 Fe(II)-[cytochrome c] + O2 + 8 H(+)(in) = 4 Fe(III)-[cytochrome c] + 2 H2O + 4 H(+)(out). In terms of biological role, component of the cytochrome c oxidase, the last enzyme in the mitochondrial electron transport chain which drives oxidative phosphorylation. The respiratory chain contains 3 multisubunit complexes succinate dehydrogenase (complex II, CII), ubiquinol-cytochrome c oxidoreductase (cytochrome b-c1 complex, complex III, CIII) and cytochrome c oxidase (complex IV, CIV), that cooperate to transfer electrons derived from NADH and succinate to molecular oxygen, creating an electrochemical gradient over the inner membrane that drives transmembrane transport and the ATP synthase. Cytochrome c oxidase is the component of the respiratory chain that catalyzes the reduction of oxygen to water. Electrons originating from reduced cytochrome c in the intermembrane space (IMS) are transferred via the dinuclear copper A center (CU(A)) of subunit 2 and heme A of subunit 1 to the active site in subunit 1, a binuclear center (BNC) formed by heme A3 and copper B (CU(B)). The BNC reduces molecular oxygen to 2 water molecules using 4 electrons from cytochrome c in the IMS and 4 protons from the mitochondrial matrix. The protein is Cytochrome c oxidase subunit 2 (MT-CO2) of Scyliorhinus canicula (Small-spotted catshark).